A 418-amino-acid polypeptide reads, in one-letter code: ATP-dependent Clp protease ATP-binding subunit ClpX (418 aa).

Residues 1–54 enclose the ClpX-type ZB domain; that stretch reads MTRKDDESDQFFCSFCGKNQKEVKKLIAGPSVYICNECVSLCEEIIEDEDKESL. Positions 13, 16, 35, and 38 each coordinate Zn(2+). Position 120-127 (120-127) interacts with ATP; the sequence is PTGCGKTL.

Belongs to the ClpX chaperone family. As to quaternary structure, component of the ClpX-ClpP complex. Forms a hexameric ring that, in the presence of ATP, binds to fourteen ClpP subunits assembled into a disk-like structure with a central cavity, resembling the structure of eukaryotic proteasomes.

ATP-dependent specificity component of the Clp protease. It directs the protease to specific substrates. Can perform chaperone functions in the absence of ClpP. This Desulforapulum autotrophicum (strain ATCC 43914 / DSM 3382 / VKM B-1955 / HRM2) (Desulfobacterium autotrophicum) protein is ATP-dependent Clp protease ATP-binding subunit ClpX.